Here is a 381-residue protein sequence, read N- to C-terminus: Testis-specific expressed protein 55 (381 aa).

Disordered stretches follow at residues 1–176 (MDEP…SDPH) and 292–317 (TTEY…QSSR). Basic and acidic residues-rich tracts occupy residues 8–24 (SLNH…EKNN) and 65–103 (RTSE…ERRT). Positions 104–113 (SQPPNQQLPS) are enriched in polar residues. Basic and acidic residues predominate over residues 114 to 125 (HSERKTSGKIDG). Acidic residues predominate over residues 134–143 (TDQETSEFDD). Polar residues-rich tracts occupy residues 147 to 163 (SAST…QEYN) and 292 to 302 (TTEYTSDTTPV). Residues 307 to 317 (RSSQRSSQSSR) are compositionally biased toward low complexity.

In terms of tissue distribution, testis-specific.

It localises to the nucleus. The protein is Testis-specific expressed protein 55 of Mus musculus (Mouse).